A 127-amino-acid chain; its full sequence is uncharacterized protein (127 aa).

T30 carries the post-translational modification Phosphothreonine. Residues 51-75 (APTYEQVLYPPASQKKTSNSTSEES) are disordered. S63 is subject to Phosphoserine.

This is an uncharacterized protein from Mus musculus (Mouse).